The following is a 487-amino-acid chain: N-succinylglutamate 5-semialdehyde dehydrogenase (487 aa).

Position 221 to 226 (221 to 226) interacts with NAD(+); the sequence is GSSDTG. Catalysis depends on residues E244 and C278.

Belongs to the aldehyde dehydrogenase family. AstD subfamily.

It carries out the reaction N-succinyl-L-glutamate 5-semialdehyde + NAD(+) + H2O = N-succinyl-L-glutamate + NADH + 2 H(+). Its pathway is amino-acid degradation; L-arginine degradation via AST pathway; L-glutamate and succinate from L-arginine: step 4/5. Its function is as follows. Catalyzes the NAD-dependent reduction of succinylglutamate semialdehyde into succinylglutamate. The chain is N-succinylglutamate 5-semialdehyde dehydrogenase from Burkholderia orbicola (strain MC0-3).